Consider the following 440-residue polypeptide: MAGLEAIKYGRGRLEVLDQLRLPHEFVYDNVSTCEEAFDSIKSMRVRGAPAIAIVAALALAVELHHKKDDSKTKQETVQYINKRLDYLLGSRPTAVDLSNAIKLLKRVSQAAAETTGTNDDNAACANVRNGYIVAAEKILEDDLTTNLAIGRYGAEYLRRQQMPIGEENNDDPSKFFTTSPPCTQGAMDKTYRKLSVLTHCNTGSLATSGHGTALGIIRSLHKMNYLDHAYCTETRPYNQGSRLTAFELVYEKIPSTLITDSMAGALFARMKDIKNISAVIVGADRVARNGDTANKIGTYSLAVLAKAHNIKFIVAAPTTSIDLETASGEDIKIEDRAPTELTQISGAVVGKDGHVDVNSTARVAIAHQGINVWNPSFDVTPSMYIDAVITEKGEVVRSSQGTFDFKAIMPERWAQQVEGKEPNGKAQVDDGTLFQMENI.

The Proton donor role is filled by Asp285.

It belongs to the eIF-2B alpha/beta/delta subunits family. MtnA subfamily.

It is found in the cytoplasm. It localises to the nucleus. The catalysed reaction is 5-(methylsulfanyl)-alpha-D-ribose 1-phosphate = 5-(methylsulfanyl)-D-ribulose 1-phosphate. It functions in the pathway amino-acid biosynthesis; L-methionine biosynthesis via salvage pathway; L-methionine from S-methyl-5-thio-alpha-D-ribose 1-phosphate: step 1/6. In terms of biological role, catalyzes the interconversion of methylthioribose-1-phosphate (MTR-1-P) into methylthioribulose-1-phosphate (MTRu-1-P). This Botryotinia fuckeliana (strain B05.10) (Noble rot fungus) protein is Methylthioribose-1-phosphate isomerase (mri1).